The sequence spans 308 residues: Staphylococcal superantigen-like 4 (308 aa).

The signal sequence occupies residues 1–30 (MKITTIAKTSLALGLLTTGVITTTTQAANA). Positions 32–117 (TLSSTKVEAP…TTKQVPTEIN (86 aa)) are disordered. Composition is skewed to polar residues over residues 33–47 (LSST…TPPS) and 55–76 (SKPN…TANA). Residues 77 to 93 (TTPPSTKVTTPPSTNTP) are compositionally biased toward low complexity. A compositionally biased stretch (polar residues) spans 94 to 114 (QPMQSTKSDTPQSPTTKQVPT). Residues 180-278 (VDVFVVLEEN…VIKMKNGGKY (99 aa)) form a sialyl Lewis X-binding region.

Belongs to the staphylococcal/streptococcal toxin family.

It is found in the secreted. Secreted protein that plays a role in immune innate response inhibition by interfering with host TLR2-mediated pathway. The protein is Staphylococcal superantigen-like 4 of Staphylococcus aureus (strain NCTC 8325 / PS 47).